The primary structure comprises 1474 residues: SH3 and multiple ankyrin repeat domains protein 2 (1474 aa).

Polar residues predominate over residues leucine 66 to serine 76. The tract at residues leucine 66–proline 125 is disordered. In terms of domain architecture, SH3 spans valine 148–cysteine 207. A Phosphoserine modification is found at glutamine 162. The PDZ domain occupies threonine 248–threonine 342. Serine 373 carries the post-translational modification Phosphoserine. The tract at residues arginine 392–asparagine 413 is disordered. A Phosphoserine modification is found at serine 457. Threonine 486 bears the Phosphothreonine mark. Residues leucine 504–cysteine 534 are disordered. The segment covering isoleucine 513–proline 529 has biased composition (pro residues). Serine 586 carries the phosphoserine modification. 3 disordered regions span residues threonine 659–lysine 920, proline 947–alanine 995, and proline 1057–aspartate 1153. A compositionally biased stretch (low complexity) spans serine 666–serine 678. Residues valine 711 to arginine 722 show a composition bias toward basic and acidic residues. Serine 724 is subject to Phosphoserine. The span at leucine 783–glycine 795 shows a compositional bias: gly residues. Composition is skewed to low complexity over residues proline 811 to proline 823 and arginine 833 to serine 846. 2 stretches are compositionally biased toward basic and acidic residues: residues alanine 847–leucine 868 and arginine 899–lysine 920. Threonine 903 carries the post-translational modification Phosphothreonine. The segment covering serine 1075–threonine 1085 has biased composition (polar residues). Residues valine 1119–glutamate 1130 show a composition bias toward basic and acidic residues. Residues threonine 1131–serine 1151 are compositionally biased toward low complexity. An SH3-binding motif is present at residues proline 1169–proline 1175. 2 disordered regions span residues glutamate 1195 to alanine 1216 and asparagine 1260 to lysine 1401. Over residues isoleucine 1202 to glycine 1212 the composition is skewed to pro residues. Over residues serine 1291–valine 1305 the composition is skewed to low complexity. Threonine 1292 carries O-linked (GlcNAc) threonine glycosylation. Residues proline 1307–serine 1317 are compositionally biased toward polar residues. Phosphoserine occurs at positions 1334 and 1338. 2 stretches are compositionally biased toward low complexity: residues serine 1352–serine 1363 and arginine 1385–serine 1399. An SAM domain is found at tryptophan 1411 to arginine 1474.

The protein belongs to the SHANK family. Is part of a complex with DLG4/PSD-95 and DLGAP1/GKAP. Interacts with CTTN/cortactin SH3 domain, DLGAP1/GKAP and alpha-latrotoxin receptor 1. Interacts with DNM2, DBNL, GRID2, BAIAP2, SLC9A3, PLCB3 and CFTR. Interacts with ABI1 (via SH3 domain). Interacts (via proline-rich region) with PDE4D isoform 5 (via N-terminal region). Interacts with PDE4D isoform 33, isoform 4, isoform 7, isoform 8 and isoform 9 but not isoform 32 and isoform 6. Interacts weakly with PDE4D isoform 31. Interacts with ABI1. As to expression, expressed in epithelial cells (at protein level). All isoforms except isoform 7 are expressed predominantly in brain, with highest levels in olfactory bulb, cerebral cortex, cerebellum, central gray matter and hippocampus. Moderate levels of expression are seen in the caudate putamen, thalamic nuclei and brain stem. In cerebellum primarily expressed in Purkinje cells. Isoform 7 is not expressed in brain but expressed in liver, cholangiocytes and thymus. Isoform 7 is present in pancreas, colonic mucosa and thymocytes (at protein level).

The protein localises to the apical cell membrane. The protein resides in the cytoplasm. It is found in the synapse. Its subcellular location is the postsynaptic density. It localises to the cell projection. The protein localises to the growth cone. The protein resides in the dendritic spine. Seems to be an adapter protein in the postsynaptic density (PSD) of excitatory synapses that interconnects receptors of the postsynaptic membrane including NMDA-type and metabotropic glutamate receptors, and the actin-based cytoskeleton. May play a role in the structural and functional organization of the dendritic spine and synaptic junction. The chain is SH3 and multiple ankyrin repeat domains protein 2 (Shank2) from Rattus norvegicus (Rat).